Here is a 257-residue protein sequence, read N- to C-terminus: uncharacterized protein (257 aa).

An N-terminal signal peptide occupies residues 1–22; the sequence is MIHSKRLKMCLCLIILSVFIGA. The N-palmitoyl cysteine moiety is linked to residue cysteine 23. The S-diacylglycerol cysteine moiety is linked to residue cysteine 23.

Belongs to the staphylococcal tandem lipoprotein family.

It is found in the cell membrane. This is an uncharacterized protein from Staphylococcus aureus (strain MRSA252).